The sequence spans 316 residues: tRNA dimethylallyltransferase (316 aa).

Gly17 to Thr24 lines the ATP pocket. Thr19–Thr24 is a binding site for substrate. Interaction with substrate tRNA regions lie at residues Asp42 to Leu45, Gln166 to Arg170, and Arg247 to Arg252.

It belongs to the IPP transferase family. Monomer. Requires Mg(2+) as cofactor.

It carries out the reaction adenosine(37) in tRNA + dimethylallyl diphosphate = N(6)-dimethylallyladenosine(37) in tRNA + diphosphate. Its function is as follows. Catalyzes the transfer of a dimethylallyl group onto the adenine at position 37 in tRNAs that read codons beginning with uridine, leading to the formation of N6-(dimethylallyl)adenosine (i(6)A). The protein is tRNA dimethylallyltransferase of Klebsiella pneumoniae (strain 342).